Consider the following 434-residue polypeptide: Methylenetetrahydrofolate--tRNA-(uracil-5-)-methyltransferase TrmFO (434 aa).

Position 10 to 15 (Gly-10 to Gly-15) interacts with FAD.

The protein belongs to the MnmG family. TrmFO subfamily. FAD is required as a cofactor.

It localises to the cytoplasm. It catalyses the reaction uridine(54) in tRNA + (6R)-5,10-methylene-5,6,7,8-tetrahydrofolate + NADH + H(+) = 5-methyluridine(54) in tRNA + (6S)-5,6,7,8-tetrahydrofolate + NAD(+). The enzyme catalyses uridine(54) in tRNA + (6R)-5,10-methylene-5,6,7,8-tetrahydrofolate + NADPH + H(+) = 5-methyluridine(54) in tRNA + (6S)-5,6,7,8-tetrahydrofolate + NADP(+). In terms of biological role, catalyzes the folate-dependent formation of 5-methyl-uridine at position 54 (M-5-U54) in all tRNAs. The protein is Methylenetetrahydrofolate--tRNA-(uracil-5-)-methyltransferase TrmFO of Bacillus cereus (strain Q1).